Reading from the N-terminus, the 195-residue chain is dITP/XTP pyrophosphatase (195 aa).

Residue 9–14 (TGNKGK) participates in substrate binding. Residues E41 and D70 each contribute to the Mg(2+) site. The Proton acceptor role is filled by D70. Residues S71, 155-158 (FGYD), K178, and 183-184 (HR) contribute to the substrate site.

Belongs to the HAM1 NTPase family. In terms of assembly, homodimer. Mg(2+) serves as cofactor.

It catalyses the reaction XTP + H2O = XMP + diphosphate + H(+). It carries out the reaction dITP + H2O = dIMP + diphosphate + H(+). The catalysed reaction is ITP + H2O = IMP + diphosphate + H(+). Pyrophosphatase that catalyzes the hydrolysis of nucleoside triphosphates to their monophosphate derivatives, with a high preference for the non-canonical purine nucleotides XTP (xanthosine triphosphate), dITP (deoxyinosine triphosphate) and ITP. Seems to function as a house-cleaning enzyme that removes non-canonical purine nucleotides from the nucleotide pool, thus preventing their incorporation into DNA/RNA and avoiding chromosomal lesions. In Haemophilus influenzae (strain ATCC 51907 / DSM 11121 / KW20 / Rd), this protein is dITP/XTP pyrophosphatase.